We begin with the raw amino-acid sequence, 252 residues long: uncharacterized protein (252 aa).

A signal peptide spans 1-23 (MKLLKTVPAIVMLAGGMFASLNA). The tract at residues 231 to 252 (EPPESAPEHTDRRTTLSLGYSM) is disordered.

This is an uncharacterized protein from Escherichia coli (strain K12).